The primary structure comprises 332 residues: Probable isoaspartyl peptidase/L-asparaginase CG7860 (332 aa).

Residue threonine 188 is the Nucleophile of the active site. Residues 216–219 (RIGD) and 239–242 (TGHG) each bind substrate.

Belongs to the Ntn-hydrolase family. As to quaternary structure, heterodimer of an alpha and beta chain produced by autocleavage. Cleaved into an alpha and beta chain by autocatalysis; this activates the enzyme. The N-terminal residue of the beta subunit is responsible for the nucleophile hydrolase activity.

The enzyme catalyses L-asparagine + H2O = L-aspartate + NH4(+). The catalysed reaction is Cleavage of a beta-linked Asp residue from the N-terminus of a polypeptide.. Functionally, has both L-asparaginase and beta-aspartyl peptidase activity. Does not have aspartylglucosaminidase activity and is inactive toward GlcNAc-L-Asn. Likewise, has no activity toward glutamine. This is Probable isoaspartyl peptidase/L-asparaginase CG7860 from Drosophila melanogaster (Fruit fly).